Consider the following 874-residue polypeptide: Protein translocase subunit SecA (874 aa).

ATP contacts are provided by residues Q85, 103-107, and D492; that span reads GEGKT. A compositionally biased stretch (basic and acidic residues) spans 839-854; it reads EEGPKKPYRREQKIGR. The disordered stretch occupies residues 839–864; that stretch reads EEGPKKPYRREQKIGRNDPCPCGSGK. Zn(2+) contacts are provided by C858, C860, C869, and C870.

This sequence belongs to the SecA family. In terms of assembly, monomer and homodimer. Part of the essential Sec protein translocation apparatus which comprises SecA, SecYEG and auxiliary proteins SecDF. Other proteins may also be involved. It depends on Zn(2+) as a cofactor.

The protein resides in the cell membrane. The protein localises to the cytoplasm. It carries out the reaction ATP + H2O + cellular proteinSide 1 = ADP + phosphate + cellular proteinSide 2.. Its function is as follows. Part of the Sec protein translocase complex. Interacts with the SecYEG preprotein conducting channel. Has a central role in coupling the hydrolysis of ATP to the transfer of proteins into and across the cell membrane, serving as an ATP-driven molecular motor driving the stepwise translocation of polypeptide chains across the membrane. In Carboxydothermus hydrogenoformans (strain ATCC BAA-161 / DSM 6008 / Z-2901), this protein is Protein translocase subunit SecA.